A 503-amino-acid polypeptide reads, in one-letter code: ATP synthase subunit alpha (503 aa).

169 to 176 lines the ATP pocket; the sequence is GDRKTGKT.

This sequence belongs to the ATPase alpha/beta chains family. F-type ATPases have 2 components, CF(1) - the catalytic core - and CF(0) - the membrane proton channel. CF(1) has five subunits: alpha(3), beta(3), gamma(1), delta(1), epsilon(1). CF(0) has three main subunits: a(1), b(2) and c(9-12). The alpha and beta chains form an alternating ring which encloses part of the gamma chain. CF(1) is attached to CF(0) by a central stalk formed by the gamma and epsilon chains, while a peripheral stalk is formed by the delta and b chains.

The protein resides in the cell membrane. The enzyme catalyses ATP + H2O + 4 H(+)(in) = ADP + phosphate + 5 H(+)(out). Produces ATP from ADP in the presence of a proton gradient across the membrane. The alpha chain is a regulatory subunit. This is ATP synthase subunit alpha from Lactobacillus delbrueckii subsp. bulgaricus (strain ATCC 11842 / DSM 20081 / BCRC 10696 / JCM 1002 / NBRC 13953 / NCIMB 11778 / NCTC 12712 / WDCM 00102 / Lb 14).